The sequence spans 264 residues: 3-methyl-2-oxobutanoate hydroxymethyltransferase (264 aa).

Residues D45 and D84 each contribute to the Mg(2+) site. Residues 45 to 46 (DS), D84, and K112 each bind 3-methyl-2-oxobutanoate. E114 is a binding site for Mg(2+). E181 functions as the Proton acceptor in the catalytic mechanism.

It belongs to the PanB family. Homodecamer; pentamer of dimers. The cofactor is Mg(2+).

Its subcellular location is the cytoplasm. The catalysed reaction is 3-methyl-2-oxobutanoate + (6R)-5,10-methylene-5,6,7,8-tetrahydrofolate + H2O = 2-dehydropantoate + (6S)-5,6,7,8-tetrahydrofolate. It functions in the pathway cofactor biosynthesis; (R)-pantothenate biosynthesis; (R)-pantoate from 3-methyl-2-oxobutanoate: step 1/2. In terms of biological role, catalyzes the reversible reaction in which hydroxymethyl group from 5,10-methylenetetrahydrofolate is transferred onto alpha-ketoisovalerate to form ketopantoate. This is 3-methyl-2-oxobutanoate hydroxymethyltransferase from Shigella flexneri serotype 5b (strain 8401).